A 92-amino-acid polypeptide reads, in one-letter code: MGFRLPGIRKTLSARNEASSKVLDAPKGYLAVYVGENMKRFVIPVSHLNQPLFQDLLSQAEEEFGYDHPMGGLTIPCSEDLFQHITSCLSAQ.

It belongs to the ARG7 family.

The protein is Indole-3-acetic acid-induced protein ARG7 (ARG7) of Vigna radiata var. radiata (Mung bean).